Here is a 151-residue protein sequence, read N- to C-terminus: 1,4-dihydroxy-2-naphthoyl-CoA hydrolase (151 aa).

D23 is a catalytic residue.

The protein belongs to the 4-hydroxybenzoyl-CoA thioesterase family. DHNA-CoA hydrolase subfamily.

It catalyses the reaction 1,4-dihydroxy-2-naphthoyl-CoA + H2O = 1,4-dihydroxy-2-naphthoate + CoA + H(+). It functions in the pathway cofactor biosynthesis; phylloquinone biosynthesis. It participates in quinol/quinone metabolism; 1,4-dihydroxy-2-naphthoate biosynthesis; 1,4-dihydroxy-2-naphthoate from chorismate: step 7/7. Functionally, catalyzes the hydrolysis of 1,4-dihydroxy-2-naphthoyl-CoA (DHNA-CoA) to 1,4-dihydroxy-2-naphthoate (DHNA), a reaction involved in phylloquinone (vitamin K1) biosynthesis. The sequence is that of 1,4-dihydroxy-2-naphthoyl-CoA hydrolase from Prochlorococcus marinus (strain MIT 9211).